Reading from the N-terminus, the 341-residue chain is S-adenosylmethionine:tRNA ribosyltransferase-isomerase (341 aa).

It belongs to the QueA family. Monomer.

The protein localises to the cytoplasm. The enzyme catalyses 7-aminomethyl-7-carbaguanosine(34) in tRNA + S-adenosyl-L-methionine = epoxyqueuosine(34) in tRNA + adenine + L-methionine + 2 H(+). Its pathway is tRNA modification; tRNA-queuosine biosynthesis. Transfers and isomerizes the ribose moiety from AdoMet to the 7-aminomethyl group of 7-deazaguanine (preQ1-tRNA) to give epoxyqueuosine (oQ-tRNA). The chain is S-adenosylmethionine:tRNA ribosyltransferase-isomerase from Alkaliphilus metalliredigens (strain QYMF).